Here is a 420-residue protein sequence, read N- to C-terminus: Light-independent protochlorophyllide reductase subunit N (420 aa).

3 residues coordinate [4Fe-4S] cluster: cysteine 21, cysteine 46, and cysteine 103.

It belongs to the BchN/ChlN family. Protochlorophyllide reductase is composed of three subunits; BchL, BchN and BchB. Forms a heterotetramer of two BchB and two BchN subunits. It depends on [4Fe-4S] cluster as a cofactor.

It carries out the reaction chlorophyllide a + oxidized 2[4Fe-4S]-[ferredoxin] + 2 ADP + 2 phosphate = protochlorophyllide a + reduced 2[4Fe-4S]-[ferredoxin] + 2 ATP + 2 H2O. The protein operates within porphyrin-containing compound metabolism; bacteriochlorophyll biosynthesis (light-independent). Functionally, component of the dark-operative protochlorophyllide reductase (DPOR) that uses Mg-ATP and reduced ferredoxin to reduce ring D of protochlorophyllide (Pchlide) to form chlorophyllide a (Chlide). This reaction is light-independent. The NB-protein (BchN-BchB) is the catalytic component of the complex. The chain is Light-independent protochlorophyllide reductase subunit N from Chlorobium phaeobacteroides (strain DSM 266 / SMG 266 / 2430).